Consider the following 384-residue polypeptide: UDP-galactopyranose mutase (384 aa).

The first 23 residues, 1-23 (MKSKKILIVGAGFSGAVIGRQLA), serve as a signal peptide directing secretion. FAD is bound by residues Ser-14, 33 to 34 (DQ), Asn-41, and 60 to 61 (HI). Asn-84, Phe-151, Thr-156, Trp-160, and Tyr-185 together coordinate UDP-alpha-D-galactose. Phe-219 is an FAD binding site. Positions 270, 280, and 314 each coordinate UDP-alpha-D-galactose. Position 343 (Arg-343) interacts with FAD. Residue Tyr-349 coordinates UDP-alpha-D-galactose. 350 to 355 (LDMDVT) provides a ligand contact to FAD.

Belongs to the UDP-galactopyranose/dTDP-fucopyranose mutase family. In terms of assembly, homodimer. FAD serves as cofactor.

It catalyses the reaction UDP-alpha-D-galactose = UDP-alpha-D-galactofuranose. It participates in bacterial outer membrane biogenesis; LPS O-antigen biosynthesis. Functionally, involved in the biosynthesis of the galactose-containing O-side-chain polysaccharide backbone structure of D-galactan I which is a key component of lipopolysaccharide (LPS). Catalyzes the interconversion through a 2-keto intermediate of uridine diphosphogalactopyranose (UDP-GalP) into uridine diphosphogalactofuranose (UDP-GalF) which is the biosynthetic precursor of galactofuranosyl residues. The sequence is that of UDP-galactopyranose mutase (rfbD) from Klebsiella pneumoniae.